The sequence spans 925 residues: Neuronal PAS domain-containing protein 3 (925 aa).

A bHLH domain is found at 58–111 (LRKEKSRDAARSRRGKENFEFYELAKLLPLPAAITSQLDKASIIRLTISYLKMR). Residues 60 to 71 (KEKSRDAARSRR) are DNA-binding. Disordered stretches follow at residues 119–138 (PPWNLRMEGPPPNTSVKGAQ) and 219–257 (LPPGRGLLSQGTTEDAASSASSSSQSETPEPVETTSPSL). The PAS 1 domain maps to 152–222 (EAHLGSHILQ…EQLGMKLPPG (71 aa)). The segment covering 234–256 (AASSASSSSQSETPEPVETTSPS) has biased composition (low complexity). The PAS 2 domain maps to 324-394 (PPPTINEVRI…HSHLDLLNKG (71 aa)). The PAC domain maps to 398–441 (TKYYRWMQKNGGYIWIQSSATIAINAKNANEKNIIWVNYLLSNP). 3 disordered regions span residues 457-555 (PEKA…FGAL), 576-645 (PCES…SSPH), and 664-774 (NESS…GASN). Basic and acidic residues-rich tracts occupy residues 484 to 493 (ENSKSDEKGN) and 529 to 549 (DSRDSDDSFEHSDFEHPKAAE). Residues 601–622 (KHQKRKRRRKRQKGGSASRRRL) are compositionally biased toward basic residues. Residues 680–690 (NESPYSMTKPP) show a composition bias toward polar residues. Gly residues-rich tracts occupy residues 700–710 (GQGGSIGGGGA) and 760–771 (GGGAGSGGGGPG).

In terms of assembly, efficient DNA binding requires dimerization with another bHLH protein. Interacts with ARNT; forms a heterodimer that binds core DNA sequence 5'-[AG]CGTG-3' within the hypoxia response element (HRE) of target gene promoters. In terms of tissue distribution, detected exclusively in adult brain in inhibitory interneurons.

The protein resides in the nucleus. May play a broad role in neurogenesis. May control regulatory pathways relevant to schizophrenia and to psychotic illness. This is Neuronal PAS domain-containing protein 3 (Npas3) from Mus musculus (Mouse).